We begin with the raw amino-acid sequence, 119 residues long: Large ribosomal subunit protein bL20 (119 aa).

The protein belongs to the bacterial ribosomal protein bL20 family.

Functionally, binds directly to 23S ribosomal RNA and is necessary for the in vitro assembly process of the 50S ribosomal subunit. It is not involved in the protein synthesizing functions of that subunit. The polypeptide is Large ribosomal subunit protein bL20 (Vesicomyosocius okutanii subsp. Calyptogena okutanii (strain HA)).